The following is an 80-amino-acid chain: Toxin Acra1 (80 aa).

The signal sequence occupies residues 1–22; that stretch reads MMKLVLFSIIVILFSLIGSIHG. In terms of domain architecture, LCN-type CS-alpha/beta spans 25-80; that stretch reads VPGNYPLDSSGNKYPCTVLGDNQSCIDVCKKHGVKYGYCYSFKCWCEFLEDKNVSI. 3 cysteine pairs are disulfide-bonded: C40–C63, C49–C68, and C53–C70.

As to expression, expressed by the venom gland.

It localises to the secreted. Its function is as follows. Probable neurotoxin that inhibits ion channels. Is toxic to mice. Is about 2.8% of the total protein in the venom. The sequence is that of Toxin Acra1 from Androctonus crassicauda (Arabian fat-tailed scorpion).